Here is an 82-residue protein sequence, read N- to C-terminus: DNA-directed RNA polymerase subunit omega (82 aa).

The protein belongs to the RNA polymerase subunit omega family. In terms of assembly, the RNAP catalytic core consists of 2 alpha, 1 beta, 1 beta' and 1 omega subunit. When a sigma factor is associated with the core the holoenzyme is formed, which can initiate transcription.

It catalyses the reaction RNA(n) + a ribonucleoside 5'-triphosphate = RNA(n+1) + diphosphate. Promotes RNA polymerase assembly. Latches the N- and C-terminal regions of the beta' subunit thereby facilitating its interaction with the beta and alpha subunits. The chain is DNA-directed RNA polymerase subunit omega from Lacticaseibacillus casei (strain BL23) (Lactobacillus casei).